The sequence spans 577 residues: Proline--tRNA ligase (577 aa).

Belongs to the class-II aminoacyl-tRNA synthetase family. ProS type 1 subfamily. Homodimer.

It is found in the cytoplasm. It carries out the reaction tRNA(Pro) + L-proline + ATP = L-prolyl-tRNA(Pro) + AMP + diphosphate. In terms of biological role, catalyzes the attachment of proline to tRNA(Pro) in a two-step reaction: proline is first activated by ATP to form Pro-AMP and then transferred to the acceptor end of tRNA(Pro). As ProRS can inadvertently accommodate and process non-cognate amino acids such as alanine and cysteine, to avoid such errors it has two additional distinct editing activities against alanine. One activity is designated as 'pretransfer' editing and involves the tRNA(Pro)-independent hydrolysis of activated Ala-AMP. The other activity is designated 'posttransfer' editing and involves deacylation of mischarged Ala-tRNA(Pro). The misacylated Cys-tRNA(Pro) is not edited by ProRS. In Chlamydia abortus (strain DSM 27085 / S26/3) (Chlamydophila abortus), this protein is Proline--tRNA ligase.